Reading from the N-terminus, the 224-residue chain is Probable Brix domain-containing ribosomal biogenesis protein (224 aa).

Positions 1 to 196 (MMLITTSHRP…IWIMEDGRRW (196 aa)) constitute a Brix domain.

Probably involved in the biogenesis of the ribosome. This Pyrococcus horikoshii (strain ATCC 700860 / DSM 12428 / JCM 9974 / NBRC 100139 / OT-3) protein is Probable Brix domain-containing ribosomal biogenesis protein.